A 504-amino-acid chain; its full sequence is Xylose import ATP-binding protein XylG (504 aa).

2 ABC transporter domains span residues 6-243 (LEMQ…VGRE) and 262-504 (VRNF…TGGK). Position 38 to 45 (38 to 45 (GENGAGKS)) interacts with ATP.

It belongs to the ABC transporter superfamily. Xylose importer (TC 3.A.1.2.4) family. The complex is composed of two ATP-binding proteins (XylG), two transmembrane proteins (XylH) and a solute-binding protein (XylF).

The protein resides in the cell membrane. It catalyses the reaction D-xylose(out) + ATP + H2O = D-xylose(in) + ADP + phosphate + H(+). In terms of biological role, part of the ABC transporter complex XylFGH involved in xylose import. Responsible for energy coupling to the transport system. The chain is Xylose import ATP-binding protein XylG from Moorella thermoacetica (strain ATCC 39073 / JCM 9320).